Reading from the N-terminus, the 89-residue chain is Bombyxin B-1 (89 aa).

An N-terminal signal peptide occupies residues 1 to 19; that stretch reads MKTSVMFMLVIVISLMCSG. 3 disulfide bridges follow: Cys-29–Cys-75, Cys-41–Cys-88, and Cys-74–Cys-79. A propeptide spans 48–66 (c peptide like); it reads GGAQYAPYFWTRQYLGSRG.

This sequence belongs to the insulin family. As to quaternary structure, heterodimer of a B chain and an A chain linked by two disulfide bonds.

The protein resides in the secreted. In terms of biological role, brain peptide responsible for activation of prothoracic glands to produce ecdysone in insects. The polypeptide is Bombyxin B-1 (BBXB1) (Bombyx mori (Silk moth)).